Here is a 692-residue protein sequence, read N- to C-terminus: MAQSSPQLDIQVLNDLQQRFPEIPRDVVSQCMLQNNSNLDACYRALTQESCKYLYMDYHNLDETRMNSNLLHINLGIHPSSTYHTGDGAQVNGRPLVHSSSDGHIDPQRSPGKLLCLVPEPQSAPAVVAQNYNQFFLNDQNRNSPTPPPQPVQQPGVGTSAMQASLPTYMHVPRYSANPITVTVSPSGHNVPRALQIVPQVQNNPYGTPIYIRHPSQNSPGRQTQQNTAWPPSPQAVLPHYNPCPPYPQSFQPTQYSPKQPQIPQSAFRSPPTSQCTSPYSSPQHQVQTNQLSHQTSHVFLPPSPSTVSPHLYQQAPPPYPKQSSLGYLPYGPGLNKGPMNKIEITVESQQRPGPTLNRSPSPINNQSAQRSQQHPVYVSNARSGSPSRGIPTQPKASYSGSPLFITYSQPPTTTGSPTPSSRVVMSPSNPTVFKITVGRAPTENLLNIVDQEQHPSTPEPIQPISLLPVSGGDKGIHKYHRSSSSGSDDYAYTQALLLHQRARMERLAKELKHEKEELERLKAEVNGMEHDLMQRRLRRVSCTTAIPTPEEMTRLRGLNRQLQINVDCTQKEIDLLQSRGMAKLDVKAMSNFYDNLSPGPAVPPNTCKKESSETTSGERKARRISVTSKIKSDPPDLQAPSSLDIGPWQRASPRPGRDEDFEGSPWNCNSCTFLNHPALNRCEQCEMPRFT.

Positions 8–51 constitute a CUE domain; sequence LDIQVLNDLQQRFPEIPRDVVSQCMLQNNSNLDACYRALTQESC. Disordered stretches follow at residues 138–159, 206–333, and 349–427; these read NDQN…GVGT, YGTP…PYGP, and SQQR…VVMS. Polar residues-rich tracts occupy residues 215 to 230, 249 to 298, and 349 to 387; these read PSQN…NTAW, QSFQ…QTSH, and SQQR…SGSP. Residues 409–422 show a composition bias toward low complexity; the sequence is SQPPTTTGSPTPSS. The stretch at 496-580 forms a coiled coil; that stretch reads ALLLHQRARM…QKEIDLLQSR (85 aa). The tract at residues 598–662 is disordered; that stretch reads SPGPAVPPNT…SPRPGRDEDF (65 aa). Residues 608 to 620 show a composition bias toward basic and acidic residues; that stretch reads CKKESSETTSGER. Residues 662 to 692 form a RanBP2-type zinc finger; the sequence is FEGSPWNCNSCTFLNHPALNRCEQCEMPRFT.

In terms of biological role, may play a role in signaling pathway. The polypeptide is Mitogen-activated protein kinase kinase kinase 7-interacting protein 3 homolog (map3k7ip3) (Xenopus laevis (African clawed frog)).